Here is a 454-residue protein sequence, read N- to C-terminus: uncharacterized protein (454 aa).

125 to 132 (GDVGCGKT) contributes to the ATP binding site.

This sequence belongs to the AFG1 ATPase family.

This is an uncharacterized protein from Schizosaccharomyces pombe (strain 972 / ATCC 24843) (Fission yeast).